The sequence spans 2642 residues: Fusarielin synthase FSL1 (2642 aa).

Residues 6 to 450 form the Ketosynthase family 3 (KS3) domain; sequence NEPIAIIGTG…GTNAHAILEA (445 aa). Active-site for beta-ketoacyl synthase activity residues include Cys179, His318, and His370. The tract at residues 566–890 is malonyl-CoA:ACP transacylase (MAT) domain; that stretch reads VFTGQGAQWA…PYTSALVRGK (325 aa). The For malonyltransferase activity role is filled by Ser659. The N-terminal hotdog fold stretch occupies residues 965 to 1101; sequence HDLLGIQTAD…GKVCIFLQTE (137 aa). The tract at residues 965–1279 is dehydratase (DH) domain; that stretch reads HDLLGIQTAD…SFSPFAAATD (315 aa). The 316-residue stretch at 965-1280 folds into the PKS/mFAS DH domain; it reads HDLLGIQTAD…FSPFAAATDR (316 aa). Catalysis depends on His997, which acts as the Proton acceptor; for dehydratase activity. Residues 1126-1280 form a C-terminal hotdog fold region; that stretch reads MAGIDVERFY…FSPFAAATDR (155 aa). The Proton donor; for dehydratase activity role is filled by Asp1189. The methyltransferase (MET) domain stretch occupies residues 1423-1622; sequence NYLDRYYTHA…GVDTNTPMPD (200 aa). Positions 2244 to 2423 are ketoreductase (KR) domain; the sequence is TYWMLGLTGD…GHNAAVIDIS (180 aa). The region spanning 2556–2635 is the Carrier domain; it reads QEVTSVLTSC…DLADYILESL (80 aa). Ser2595 carries the post-translational modification O-(pantetheine 4'-phosphoryl)serine.

It depends on pantetheine 4'-phosphate as a cofactor.

It participates in secondary metabolite biosynthesis. In terms of biological role, reducing polyketide synthase; part of the gene cluster that mediates the biosynthesis of fusarielins F, G and H, decaketide compounds with 5 methylations and a decaline core that act as mycoestrogens as they stimulate growth of MCF-7 breast cancer cells. The initial compound in the pathway is produced by the reducing polyketide synthase FSL1. FSL1 lacks an active enoyl reductase (ER) domain and biosynthesis of fusarielins relies on the trans-acting enoyl reductase FSL5, before it is released through hydrolysis catalyzed by the thioesterase FSL2. Fusarielins F, G, and H have a C11=C12 cis double bond and is fully reduced between C10 and C11 and between C12 and C13. FSL3 can be involved in the formation of the C11=C12 cis double bond by moving a hypothetical C10=C11 or C12=C13 trans double bond to form prefusarielin. Prefusarielin is oxygenated at C15 and C16 by the cytochrome P450 monooxygenase FSL4, resulting in fusarielin F, which subsequently is epoxidized into fusarielin G by the same enzyme. The final step in the pathway is a reduction of the carboxylic acid moiety to yield fusarielin H via a still undetermined mechanism. This Gibberella zeae (strain ATCC MYA-4620 / CBS 123657 / FGSC 9075 / NRRL 31084 / PH-1) (Wheat head blight fungus) protein is Fusarielin synthase FSL1.